The following is a 157-amino-acid chain: Nicotinate dehydrogenase small FeS subunit (157 aa).

One can recognise a 2Fe-2S ferredoxin-type domain in the interval 4-80 (ITINLNLNGE…ESTIITLEGV (77 aa)). [2Fe-2S] cluster contacts are provided by Cys-42, Cys-47, Cys-50, Cys-62, Cys-101, Cys-104, Cys-136, and Cys-138.

As to quaternary structure, heterooctamer of NDHM, NDHL, NDHS and NDHF. Dimer of heterotetramers. The cofactor is [2Fe-2S] cluster.

It catalyses the reaction nicotinate + NADP(+) + H2O = 6-hydroxynicotinate + NADPH + H(+). It functions in the pathway cofactor degradation; nicotinate degradation; 6-hydroxynicotinate from nicotinate: step 1/1. With respect to regulation, reversibly inactivated by selenide and sulfide. Not inhibited by cyanide. Catalyzes the hydroxylation of nicotinate to 6-hydroxynicotinate. Also active against 2-pyrazinecarboxylic acid, but inactive against other nicotinate analogs. This Eubacterium barkeri (Clostridium barkeri) protein is Nicotinate dehydrogenase small FeS subunit (ndhS).